Consider the following 561-residue polypeptide: Glutamate--tRNA ligase (561 aa).

The short motif at 107–117 (PNPSGPLHLGH) is the 'HIGH' region element.

It belongs to the class-I aminoacyl-tRNA synthetase family. Glutamate--tRNA ligase type 2 subfamily.

Its subcellular location is the cytoplasm. It catalyses the reaction tRNA(Glu) + L-glutamate + ATP = L-glutamyl-tRNA(Glu) + AMP + diphosphate. In terms of biological role, catalyzes the attachment of glutamate to tRNA(Glu) in a two-step reaction: glutamate is first activated by ATP to form Glu-AMP and then transferred to the acceptor end of tRNA(Glu). The sequence is that of Glutamate--tRNA ligase from Methanospirillum hungatei JF-1 (strain ATCC 27890 / DSM 864 / NBRC 100397 / JF-1).